A 353-amino-acid polypeptide reads, in one-letter code: Photosystem II protein D1 (353 aa).

Residue threonine 2 is modified to N-acetylthreonine. Phosphothreonine is present on threonine 2. The next 3 helical transmembrane spans lie at 29–46 (YIGW…TATS), 118–133 (HFLL…EWEL), and 142–156 (WIAV…AATA). Chlorophyll a is bound at residue histidine 118. Tyrosine 126 provides a ligand contact to pheophytin a. Residues aspartate 170 and glutamate 189 each coordinate [CaMn4O5] cluster. A helical membrane pass occupies residues 197-218 (FHMLGVAGVFGGSLFSAMHGSL). Histidine 198 contacts chlorophyll a. Residues histidine 215 and 264–265 (SF) contribute to the a quinone site. Histidine 215 contributes to the Fe cation binding site. Fe cation is bound at residue histidine 272. Residues 274-288 (FLAAWPVVGIWFTAL) traverse the membrane as a helical segment. 4 residues coordinate [CaMn4O5] cluster: histidine 332, glutamate 333, aspartate 342, and alanine 344. Residues 345–353 (AIEAPSTNG) constitute a propeptide that is removed on maturation.

The protein belongs to the reaction center PufL/M/PsbA/D family. As to quaternary structure, PSII is composed of 1 copy each of membrane proteins PsbA, PsbB, PsbC, PsbD, PsbE, PsbF, PsbH, PsbI, PsbJ, PsbK, PsbL, PsbM, PsbT, PsbX, PsbY, PsbZ, Psb30/Ycf12, at least 3 peripheral proteins of the oxygen-evolving complex and a large number of cofactors. It forms dimeric complexes. Requires The D1/D2 heterodimer binds P680, chlorophylls that are the primary electron donor of PSII, and subsequent electron acceptors. It shares a non-heme iron and each subunit binds pheophytin, quinone, additional chlorophylls, carotenoids and lipids. D1 provides most of the ligands for the Mn4-Ca-O5 cluster of the oxygen-evolving complex (OEC). There is also a Cl(-1) ion associated with D1 and D2, which is required for oxygen evolution. The PSII complex binds additional chlorophylls, carotenoids and specific lipids. as cofactor. Tyr-161 forms a radical intermediate that is referred to as redox-active TyrZ, YZ or Y-Z. Post-translationally, C-terminally processed by CTPA; processing is essential to allow assembly of the oxygen-evolving complex and thus photosynthetic growth.

The protein localises to the plastid. Its subcellular location is the chloroplast thylakoid membrane. It carries out the reaction 2 a plastoquinone + 4 hnu + 2 H2O = 2 a plastoquinol + O2. Its function is as follows. Photosystem II (PSII) is a light-driven water:plastoquinone oxidoreductase that uses light energy to abstract electrons from H(2)O, generating O(2) and a proton gradient subsequently used for ATP formation. It consists of a core antenna complex that captures photons, and an electron transfer chain that converts photonic excitation into a charge separation. The D1/D2 (PsbA/PsbD) reaction center heterodimer binds P680, the primary electron donor of PSII as well as several subsequent electron acceptors. The protein is Photosystem II protein D1 of Citrus sinensis (Sweet orange).